A 275-amino-acid chain; its full sequence is NAD kinase (275 aa).

The active-site Proton acceptor is Asp53. NAD(+)-binding positions include 53 to 54, 129 to 130, Arg155, Asp157, and 168 to 173; these read DG, NE, and TAYNKS.

The protein belongs to the NAD kinase family. Requires a divalent metal cation as cofactor.

Its subcellular location is the cytoplasm. The enzyme catalyses NAD(+) + ATP = ADP + NADP(+) + H(+). Functionally, involved in the regulation of the intracellular balance of NAD and NADP, and is a key enzyme in the biosynthesis of NADP. Catalyzes specifically the phosphorylation on 2'-hydroxyl of the adenosine moiety of NAD to yield NADP. The protein is NAD kinase of Streptococcus agalactiae serotype Ia (strain ATCC 27591 / A909 / CDC SS700).